Consider the following 484-residue polypeptide: Glutamyl-tRNA(Gln) amidotransferase subunit A (484 aa).

Catalysis depends on charge relay system residues Lys77 and Ser152. Residue Ser176 is the Acyl-ester intermediate of the active site.

Belongs to the amidase family. GatA subfamily. As to quaternary structure, heterotrimer of A, B and C subunits.

It catalyses the reaction L-glutamyl-tRNA(Gln) + L-glutamine + ATP + H2O = L-glutaminyl-tRNA(Gln) + L-glutamate + ADP + phosphate + H(+). Functionally, allows the formation of correctly charged Gln-tRNA(Gln) through the transamidation of misacylated Glu-tRNA(Gln) in organisms which lack glutaminyl-tRNA synthetase. The reaction takes place in the presence of glutamine and ATP through an activated gamma-phospho-Glu-tRNA(Gln). This Pseudomonas aeruginosa (strain LESB58) protein is Glutamyl-tRNA(Gln) amidotransferase subunit A.